The sequence spans 470 residues: ATP synthase subunit beta (470 aa).

157–164 (GGAGVGKT) is an ATP binding site.

Belongs to the ATPase alpha/beta chains family. F-type ATPases have 2 components, CF(1) - the catalytic core - and CF(0) - the membrane proton channel. CF(1) has five subunits: alpha(3), beta(3), gamma(1), delta(1), epsilon(1). CF(0) has three main subunits: a(1), b(2) and c(9-12). The alpha and beta chains form an alternating ring which encloses part of the gamma chain. CF(1) is attached to CF(0) by a central stalk formed by the gamma and epsilon chains, while a peripheral stalk is formed by the delta and b chains.

The protein localises to the cell membrane. The catalysed reaction is ATP + H2O + 4 H(+)(in) = ADP + phosphate + 5 H(+)(out). Functionally, produces ATP from ADP in the presence of a proton gradient across the membrane. The catalytic sites are hosted primarily by the beta subunits. The protein is ATP synthase subunit beta of Pelotomaculum thermopropionicum (strain DSM 13744 / JCM 10971 / SI).